Reading from the N-terminus, the 251-residue chain is Flap endonuclease Xni (251 aa).

Position 104 (D104) interacts with Mg(2+). In terms of domain architecture, 5'-3' exonuclease spans V160–L249. 5 residues coordinate K(+): L171, A172, P180, V182, and I185. The interaction with DNA stretch occupies residues G184–S189.

It belongs to the Xni family. Requires Mg(2+) as cofactor. K(+) is required as a cofactor.

Its function is as follows. Has flap endonuclease activity. During DNA replication, flap endonucleases cleave the 5'-overhanging flap structure that is generated by displacement synthesis when DNA polymerase encounters the 5'-end of a downstream Okazaki fragment. This is Flap endonuclease Xni from Escherichia coli O81 (strain ED1a).